The primary structure comprises 130 residues: Small ribosomal subunit protein uS9 (130 aa).

Belongs to the universal ribosomal protein uS9 family.

The protein is Small ribosomal subunit protein uS9 of Geotalea uraniireducens (strain Rf4) (Geobacter uraniireducens).